The sequence spans 1168 residues: Probable pre-mRNA-splicing factor ATP-dependent RNA helicase DEAH5 (1168 aa).

The segment at 76 to 206 is disordered; that stretch reads IYPPKPKSEK…KDEYVEEDKG (131 aa). Composition is skewed to basic and acidic residues over residues 81–172 and 180–206; these read PKSE…DRRS and GRGDGGEGEDRRRDRRAKDEYVEEDKG. Residues 214–283 form the S1 motif domain; sequence YQVYKGRVTR…SSDKYSLSMR (70 aa). The segment at 289 to 326 is disordered; it reads TGRDLIPLRKPSDEDDSSRSNPSYRTKDGQVTKTGISG. Serine 411 bears the Phosphoserine mark. A Helicase ATP-binding domain is found at 525-688; it reads IQAVHDNQVL…FFNCNIFTIP (164 aa). ATP is bound at residue 538–545; it reads GETGSGKT. Positions 635–638 match the DEAH box motif; it reads DEAH. Residues 706-886 enclose the Helicase C-terminal domain; that stretch reads YLDAALITVL…MTTLTMKAMG (181 aa).

The protein belongs to the DEAD box helicase family. DEAH subfamily. PRP22 sub-subfamily.

It localises to the nucleus. The catalysed reaction is ATP + H2O = ADP + phosphate + H(+). May be involved in pre-mRNA splicing. This is Probable pre-mRNA-splicing factor ATP-dependent RNA helicase DEAH5 from Arabidopsis thaliana (Mouse-ear cress).